The following is a 184-amino-acid chain: Large ribosomal subunit protein uL22B (184 aa).

Residue Lys46 forms a Glycyl lysine isopeptide (Lys-Gly) (interchain with G-Cter in ubiquitin) linkage. Phosphothreonine is present on Thr70.

It belongs to the universal ribosomal protein uL22 family. Component of the large ribosomal subunit (LSU). Mature yeast ribosomes consist of a small (40S) and a large (60S) subunit. The 40S small subunit contains 1 molecule of ribosomal RNA (18S rRNA) and 33 different proteins (encoded by 57 genes). The large 60S subunit contains 3 rRNA molecules (25S, 5.8S and 5S rRNA) and 46 different proteins (encoded by 81 genes). uL22 is associated with the polypeptide exit tunnel.

The protein localises to the cytoplasm. Functionally, component of the ribosome, a large ribonucleoprotein complex responsible for the synthesis of proteins in the cell. The small ribosomal subunit (SSU) binds messenger RNAs (mRNAs) and translates the encoded message by selecting cognate aminoacyl-transfer RNA (tRNA) molecules. The large subunit (LSU) contains the ribosomal catalytic site termed the peptidyl transferase center (PTC), which catalyzes the formation of peptide bonds, thereby polymerizing the amino acids delivered by tRNAs into a polypeptide chain. The nascent polypeptides leave the ribosome through a tunnel in the LSU and interact with protein factors that function in enzymatic processing, targeting, and the membrane insertion of nascent chains at the exit of the ribosomal tunnel. This is Large ribosomal subunit protein uL22B from Saccharomyces cerevisiae (strain ATCC 204508 / S288c) (Baker's yeast).